The primary structure comprises 364 residues: Formimidoylglutamase (364 aa).

Residues H133, D189, H191, D193, D286, and D288 each coordinate Mn(2+).

It belongs to the arginase family. Mn(2+) serves as cofactor.

It carries out the reaction N-formimidoyl-L-glutamate + H2O = formamide + L-glutamate. The protein operates within amino-acid degradation; L-histidine degradation into L-glutamate; L-glutamate from N-formimidoyl-L-glutamate (hydrolase route): step 1/1. Its function is as follows. Catalyzes the conversion of N-formimidoyl-L-glutamate to L-glutamate and formamide. This chain is Formimidoylglutamase, found in Photobacterium profundum (strain SS9).